A 262-amino-acid polypeptide reads, in one-letter code: Adenosine deaminase RL5 (262 aa).

Residues Asn-36, Tyr-40, Met-68, His-73, Cys-75, Asn-114, Cys-118, His-135, Cys-172, Cys-175, Cys-234, and Cys-237 each coordinate Cu cation.

The protein belongs to the purine nucleoside phosphorylase YfiH/LACC1 family. In terms of assembly, homodimer. It depends on Cu cation as a cofactor.

It catalyses the reaction adenosine + phosphate = alpha-D-ribose 1-phosphate + adenine. It carries out the reaction S-methyl-5'-thioadenosine + phosphate = 5-(methylsulfanyl)-alpha-D-ribose 1-phosphate + adenine. The catalysed reaction is inosine + phosphate = alpha-D-ribose 1-phosphate + hypoxanthine. The enzyme catalyses adenosine + H2O + H(+) = inosine + NH4(+). In terms of biological role, purine nucleoside enzyme that catalyzes the phosphorolysis of adenosine and inosine nucleosides, yielding D-ribose 1-phosphate and the respective free bases, adenine and hypoxanthine. Also catalyzes the phosphorolysis of S-methyl-5'-thioadenosine into adenine and S-methyl-5-thio-alpha-D-ribose 1-phosphate. Also has adenosine deaminase activity. Also acts as a multicopper oxidase able to oxidize a wide variety of polyphenols and related compounds in vitro. Displays substrate preference as follows: syringaldazine &gt; 2,6-dimethoxyphenol &gt; veratryl alcohol &gt; guaiacol &gt; tetramethylbenzidine &gt; 4-methoxybenzyl alcohol &gt; 2,2'-azino-bis(3-ethylbenzthiazoline-6-sulfonic acid) (ABTS) &gt;&gt; phenol red &gt; 1-hydroxybenzotriazole. Cannot use 3,4-dimetoxybenzyl alcohol and violuric acid as substrates. As this enzyme is derived from a rumen microbial community, it may have a role in the digestion of complex plant materials such as ryegrass lignin. The polypeptide is Adenosine deaminase RL5 (Unknown prokaryotic organism).